The primary structure comprises 161 residues: Blue copper protein 1a (161 aa).

The N-terminal stretch at 1 to 23 is a signal peptide; it reads MASSRVVLILSISMVLLSSVAIA. The 101-residue stretch at 24–124 folds into the Phytocyanin domain; that stretch reads TDHIVGDDKG…QMKLVITVLA (101 aa). Residue H64 coordinates Cu cation. N-linked (GlcNAc...) asparagine glycosylation occurs at N70. C77 and C111 form a disulfide bridge. Cu cation is bound by residues C105, H110, and M116. The helical transmembrane segment at 141–161 threads the bilayer; sequence VVSSLFGVVMAIMVAIAVIFA.

Its subcellular location is the membrane. The polypeptide is Blue copper protein 1a (Medicago truncatula (Barrel medic)).